Reading from the N-terminus, the 193-residue chain is Molybdenum cofactor guanylyltransferase (193 aa).

GTP contacts are provided by residues 8–10 (LAG), Lys-21, Asp-67, and Asp-98. Asp-98 lines the Mg(2+) pocket.

The protein belongs to the MobA family. In terms of assembly, monomer. Mg(2+) is required as a cofactor.

Its subcellular location is the cytoplasm. It catalyses the reaction Mo-molybdopterin + GTP + H(+) = Mo-molybdopterin guanine dinucleotide + diphosphate. Transfers a GMP moiety from GTP to Mo-molybdopterin (Mo-MPT) cofactor (Moco or molybdenum cofactor) to form Mo-molybdopterin guanine dinucleotide (Mo-MGD) cofactor. This is Molybdenum cofactor guanylyltransferase from Cereibacter sphaeroides (Rhodobacter sphaeroides).